The primary structure comprises 146 residues: Cysteine protease inhibitor 3 (146 aa).

2 disulfide bridges follow: C8–C60 and C109–C115.

Belongs to the protease inhibitor I3 (leguminous Kunitz-type inhibitor) family.

It is found in the vacuole. In terms of biological role, inhibitor of cysteine proteases. May protect the plant by inhibiting proteases of invading organisms. The chain is Cysteine protease inhibitor 3 from Solanum tuberosum (Potato).